Reading from the N-terminus, the 162-residue chain is MSGMRVYLGADHAGYELKQRIIEHLKQTGHEPIDCGALRYDADDDYPAFCIAAATRTVADPGSLGIVLGGSGNGEQIAANKVPGARCALAWSVQTAALAREHNNAQLIGIGGRMHTVAEALAIVDAFVTTPWSKAQRHQRRIDILAEYERTHEAPPVPGAPA.

D-ribulose 5-phosphate contacts are provided by residues 11 to 12 (DH) and 70 to 74 (GSGNG). The active-site Proton acceptor is Glu-75. His-102 serves as the catalytic Proton donor. 4 residues coordinate D-ribulose 5-phosphate: Asn-103, Arg-113, Arg-137, and Arg-141.

This sequence belongs to the LacAB/RpiB family. As to quaternary structure, homodimer.

The enzyme catalyses aldehydo-D-ribose 5-phosphate = D-ribulose 5-phosphate. It participates in carbohydrate degradation; pentose phosphate pathway; D-ribose 5-phosphate from D-ribulose 5-phosphate (non-oxidative stage): step 1/1. In terms of biological role, catalyzes the interconversion of ribulose-5-P and ribose-5-P. This is Ribose-5-phosphate isomerase B from Mycobacterium bovis (strain ATCC BAA-935 / AF2122/97).